Reading from the N-terminus, the 193-residue chain is dCTP deaminase (193 aa).

Residues 110-115 (RSSLAR), D128, 136-138 (VLE), Y171, K178, and Q182 contribute to the dCTP site. Residue E138 is the Proton donor/acceptor of the active site. Residues 169-193 (RPYNRRQDAKYKDQQGAVASRIDKD) form a disordered region.

Belongs to the dCTP deaminase family. In terms of assembly, homotrimer.

The catalysed reaction is dCTP + H2O + H(+) = dUTP + NH4(+). It functions in the pathway pyrimidine metabolism; dUMP biosynthesis; dUMP from dCTP (dUTP route): step 1/2. Catalyzes the deamination of dCTP to dUTP. The polypeptide is dCTP deaminase (Pectobacterium carotovorum subsp. carotovorum (strain PC1)).